A 482-amino-acid chain; its full sequence is Probable cytosol aminopeptidase (482 aa).

Mn(2+)-binding residues include K251 and D256. K263 is an active-site residue. The Mn(2+) site is built by D274, D333, and E335. R337 is a catalytic residue.

It belongs to the peptidase M17 family. Requires Mn(2+) as cofactor.

Its subcellular location is the cytoplasm. It catalyses the reaction Release of an N-terminal amino acid, Xaa-|-Yaa-, in which Xaa is preferably Leu, but may be other amino acids including Pro although not Arg or Lys, and Yaa may be Pro. Amino acid amides and methyl esters are also readily hydrolyzed, but rates on arylamides are exceedingly low.. It carries out the reaction Release of an N-terminal amino acid, preferentially leucine, but not glutamic or aspartic acids.. In terms of biological role, presumably involved in the processing and regular turnover of intracellular proteins. Catalyzes the removal of unsubstituted N-terminal amino acids from various peptides. The polypeptide is Probable cytosol aminopeptidase (Acinetobacter baylyi (strain ATCC 33305 / BD413 / ADP1)).